Reading from the N-terminus, the 106-residue chain is MADFLGMMKQAAQFQSKMKAMQDELDQIEVDGASGGGLVTVRMTAKMEVKGISIDPSLIKPDEREILEDLVVTALADARRKAEVAMQEKMQALTGGLGLPPGLGFS.

This sequence belongs to the YbaB/EbfC family. In terms of assembly, homodimer.

The protein localises to the cytoplasm. It localises to the nucleoid. Its function is as follows. Binds to DNA and alters its conformation. May be involved in regulation of gene expression, nucleoid organization and DNA protection. In Nitrobacter winogradskyi (strain ATCC 25391 / DSM 10237 / CIP 104748 / NCIMB 11846 / Nb-255), this protein is Nucleoid-associated protein Nwi_0368.